Reading from the N-terminus, the 946-residue chain is Clumping factor A (946 aa).

A signal peptide spans 1–39 (MNMKKKEKHAIRKKSIGVASVLVGTLIGFGLLSSKEADA). The YSIRK-G/S signaling motif motif lies at 9-20 (HAIRKKSIGVAS). Disordered regions lie at residues 34–199 (SKEA…SNKD) and 528–917 (FNNG…SEDE). The segment at 40–542 (SENSVTQSDS…GSGDGIDKPV (503 aa)) is ligand binding A region. The span at 47 to 65 (SDSASNESKSNDSSSVSAA) shows a compositional bias: low complexity. The segment covering 71–111 (TNVSDTKTSSNTNNGETSVAQNPAQQETTQSALTNATTEET) has biased composition (polar residues). 2 stretches are compositionally biased toward low complexity: residues 117 to 131 (ATTA…ATTQ) and 142 to 161 (NQTS…SVNS). Residues 162–199 (PQNSTNAENVSTTQDTSTEATPSNNESAPQSTDASNKD) show a composition bias toward polar residues. Residues 546–564 (QPDEPGEIEPIPEDSDSDP) show a composition bias toward acidic residues. Over residues 565–597 (GSDSGSDSNSDSGSDSGSDSTSDSGSDSASDSD) the composition is skewed to low complexity. The segment covering 598 to 874 (SASDSDSASD…DSDSESDSNS (277 aa)) has biased composition (acidic residues). The span at 875-893 (DSESGSNNNVVPPNSPKNG) shows a compositional bias: low complexity. Residues 900–909 (NEAKDSKEPL) show a composition bias toward basic and acidic residues. The LPXTG sorting signal signature appears at 909 to 913 (LPDTG). At threonine 912 the chain carries Pentaglycyl murein peptidoglycan amidated threonine. A propeptide spans 913-946 (GSEDEANTSLIWGLLASIGSLLLFRRKKENKDKK) (removed by sortase).

It belongs to the serine-aspartate repeat-containing protein (SDr) family.

The protein localises to the secreted. It localises to the cell wall. Its function is as follows. Cell surface-associated protein implicated in virulence. Promotes bacterial attachment exclusively to the gamma-chain of human fibrinogen. Induces formation of bacterial clumps. This is Clumping factor A (clfA) from Staphylococcus aureus (strain MW2).